The following is a 452-amino-acid chain: NADH-ubiquinone oxidoreductase chain 4 (452 aa).

The next 14 membrane-spanning stretches (helical) occupy residues 4 to 24 (LVLG…SMVW), 29 to 49 (VGSV…MTIS), 59 to 79 (FVSL…LLAS), 88 to 110 (LIYQ…LAFM), 114 to 136 (LLLF…TRWG), 144 to 164 (AGTY…ICLI), 182 to 202 (VFQL…AFLV), 221 to 241 (PIAG…YGMM), 252 to 272 (MLSS…MGGI), 282 to 304 (LIAY…GVAW), 309 to 331 (AMVL…NLWY), 345 to 365 (LIMI…MNMA), 390 to 410 (IVYM…LFGM), and 432 to 452 (LLTT…GLMF).

Belongs to the complex I subunit 4 family.

It is found in the mitochondrion membrane. The catalysed reaction is a ubiquinone + NADH + 5 H(+)(in) = a ubiquinol + NAD(+) + 4 H(+)(out). Core subunit of the mitochondrial membrane respiratory chain NADH dehydrogenase (Complex I) that is believed to belong to the minimal assembly required for catalysis. Complex I functions in the transfer of electrons from NADH to the respiratory chain. The immediate electron acceptor for the enzyme is believed to be ubiquinone. The polypeptide is NADH-ubiquinone oxidoreductase chain 4 (ND4) (Branchiostoma lanceolatum (Common lancelet)).